The chain runs to 312 residues: tRNA pseudouridine synthase B (312 aa).

Asp-47 acts as the Nucleophile in catalysis.

It belongs to the pseudouridine synthase TruB family. Type 1 subfamily.

It catalyses the reaction uridine(55) in tRNA = pseudouridine(55) in tRNA. Functionally, responsible for synthesis of pseudouridine from uracil-55 in the psi GC loop of transfer RNAs. The protein is tRNA pseudouridine synthase B of Vibrio cholerae serotype O1 (strain M66-2).